The chain runs to 97 residues: MLTDLYLKILMEEHKKRTSAKTLEMVKNGTHPAQKEITCDFCGHIGKGPGFYLKHNDRCKLNPNRIQLNCPYCDKKDLSPSTYKRWHGDNCKTRFND.

Its function is as follows. This endonuclease is specific to the nrdB gene splice junction and is involved in intron homing. The sequence is that of Defective intron-associated endonuclease 3 (ITEVIIIR) from Escherichia coli (Bacteriophage T4).